The primary structure comprises 404 residues: BRCA1-A complex subunit Abraxas 1 (404 aa).

In terms of domain architecture, MPN spans Tyr7–Gln161. Residues Met219–Asp268 adopt a coiled-coil conformation. Positions Gly339–Phe404 are disordered. Positions Arg391–Phe404 are enriched in polar residues. Residue Ser401 is modified to Phosphoserine. Residues Ser401–Phe404 carry the pSXXF motif motif.

This sequence belongs to the FAM175 family. Abraxas subfamily. As to quaternary structure, component of the BRCA1-A complex. Component of the BRISC complex. Homodimer. Interacts directly (when phosphorylated at Ser-401) with brca1. The phosphorylated homodimer can interact directly with two brca1 chains, giving rise to a heterotetramer. Phosphorylation of Ser-401 of the pSXXF motif by ATM or ATR constitutes a specific recognition motif for the BRCT domain of BRCA1.

The protein resides in the nucleus. Its function is as follows. Involved in DNA damage response and double-strand break (DSB) repair. Component of the BRCA1-A complex, acting as a central scaffold protein that assembles the various components of the complex and mediates the recruitment of brca1. The BRCA1-A complex specifically recognizes 'Lys-63'-linked ubiquitinated histones H2A and H2AX at DNA lesion sites, leading to target the brca1-bard1 heterodimer to sites of DNA damage at DSBs. This complex also possesses deubiquitinase activity that specifically removes 'Lys-63'-linked ubiquitin on histones H2A and H2AX. In Salmo salar (Atlantic salmon), this protein is BRCA1-A complex subunit Abraxas 1.